Consider the following 104-residue polypeptide: UPF0473 protein LJ_0477 (104 aa).

It belongs to the UPF0473 family.

This chain is UPF0473 protein LJ_0477, found in Lactobacillus johnsonii (strain CNCM I-12250 / La1 / NCC 533).